A 446-amino-acid polypeptide reads, in one-letter code: Chromosomal replication initiator protein DnaA (446 aa).

Residues 1–82 (MENILDLWNQ…ELSIKFVIPQ (82 aa)) form a domain I, interacts with DnaA modulators region. A domain II region spans residues 83-103 (NQDVEDFMPKPQVKKAVKEDT). The segment at 104 to 332 (SDFPQNMLNP…VAYSSLINKD (229 aa)) is domain III, AAA+ region. The ATP site is built by Gly154, Leu155, Gly156, Lys157, and Thr158. Mg(2+) is bound at residue Thr158. The Initiator specific motif (ISM) signature appears at 182–206 (SEKFTNEFINSIRDNKAVDFRNRYR). Residues Asp214 and Asp215 each contribute to the Mg(2+) site. The linker stretch occupies residues 333–346 (INADLAAEALKDII). A domain IV, binds dsDNA region spans residues 347–446 (PSSKPKVITI…HVKEIKEQLK (100 aa)).

The protein belongs to the DnaA family. The DNA replisome assembles sequentially on oriC in this order; DnaA, DnaD, DnaB, DnaI-DnaC helicase. Oligomerizes as a right-handed, spiral filament on DNA at oriC. Forms an ATP-dependent helix on DNA at oriC; both DnaD and YabA inhibit formation of the DnaA helix. Forms an ATP-dependent oligomer, formation is stimulated by ds- and ssDNA; monomeric ADP-Soj inhibits oligomer formation. Interacts with DnaD. Interacts with YabA, and via YabA, with the replication machinery subunit beta sliding clamp DnaN. Interacts with YabA via domain IIIa (residues 109-275). Isolated domain I forms a 1:1 complex with SirA. Interacts with Soj, probably via domain III. Interacts via domains I and III with CcrZ. Interacts via domain IV with skin prophage-like element protein YqaH.

The protein resides in the cytoplasm. Its subcellular location is the nucleoid. The enzyme catalyses ATP + H2O = ADP + phosphate + H(+). Oligomerization of DnaA can be controlled by Soj; monomeric ADP-Soj inhibits formation of the DnaA helix. YabA prevents the cooperative binding of DnaA-ATP to oriC-containing sequences; increased levels of DnaN (beta sliding clamp subunit of DNA polymerase) removes YabA from association with DnaA on the chromosome, enabling increased association of DnaA with its chromosomal binding sites. Both Soj and YabA chase DnaA from oriC site, YabA tethers DnaA to the DNA replication fork via the beta sliding clamp subunit DnaN. SirA antagonizes the ability of DnaA to bind to the replication origin, and thus decreases replication inititation during sporulation. Small protein YqaH, part of the skin prophage-like element, binds to DnaA and antagonizes its replication initiation and transcriptional regulation activities. Plays an essential role in the initiation and regulation of chromosomal replication. ATP-DnaA binds to the origin of replication (oriC) to initiate formation of the DNA replication initiation complex once per cell cycle. Binds directly to oriC at a 9 bp consensus (DnaA box): 5'-TTATCCACA-3' and separates the double-stranded (ds)DNA. Forms a right-handed helical filament on oriC DNA; dsDNA binds to the exterior of the filament while single-stranded (ss)DNA is stabilized in the filament's interior. The ATP-DnaA-oriC complex binds and stabilizes one strand of the AT-rich DNA unwinding element (DUE or basal unwinding system, BUS), permitting loading of DNA polymerase. Binds ATP with high affinity, ADP with lower affinity, but not AMP, cAMP or cGMP; ATP stimulates binding to DnaA boxes. Once bound promotes sequence-specific strand separation of DnaA-trios (3'-GAT-5' consensus) adjacent to oriC in the presence of ATP but not ADP. Domains III and IV are sufficient to separate dsDNA strands. The 'initiator specific motif' (ISM) of domain III contacts the middle adenine residue of the DnaA-trio probably stretching and stabilizing ssDNA. DnaA-trio recognition is co-operative and depends on DnaA self-assembly. The ssDNA serves as an assembly region for the replication machinery. Tethered to DnaN (beta sliding clamp subunit of DNA polymerase) and thus replication forks by YabA. During replication initiation DnaA-ATP binds cooperatively to sequences in oriC. YabA prevents this cooperative binding while still allowing DnaA to bind DNA. During the cell cycle an initial phase occurs in which DnaA is associated with origin regions, then the origin regions become spatially separate from the centrally sequestered DnaA molecules, and most DnaA molecules are unable to reassociate with origin regions. Does not require YabA to bind DNA. During sporulation SirA prevents DnaA association with the replication origin to prevent excessive chromosome replication. Overexpression induces the SOS response; increasing expression of downstream dnaN blocks this induction. Over-initiation of DNA replication is very deleterious; isolated suppressors in relA, ndrR, dnaC, cshA and crrZ increase replication elongation, decrease replication inititation or lead to a decrease in the replicative DNA helicase. Binds acidic phospholipids. In terms of biological role, the half-life of ADP-DnaA is 1.5 minutes, of ATP-DnaA is 5 minutes at 37 degrees Celsius; in E.coli the half-life of ADP-DnaA is about 45 minutes. Functionally, also acts as a transcriptional regulator. DnaA inhibits its own gene expression. DnaA binds specifically to the promoter regions of at least 20 operons (56 genes), including itself, sda and dnaB, and probably controls their expression in response to DNA replication inhibition. The polypeptide is Chromosomal replication initiator protein DnaA (Bacillus subtilis (strain 168)).